The primary structure comprises 790 residues: Solute carrier family 26 member 9 (790 aa).

At 1 to 70 (MNQPRPRYVV…WLPKYKIKDY (70 aa)) the chain is on the cytoplasmic side. A helical membrane pass occupies residues 71–96 (IIPDLLGGLSGGCIQVPQGMAFALLA). Residues 97–100 (NLPA) are Extracellular-facing. A helical membrane pass occupies residues 101–109 (VNGLYSSFF). Over 110–129 (PLLTYFFLGGIHQMVPGTFA) the chain is Cytoplasmic. The chain crosses the membrane as a helical span at residues 130 to 142 (VISILVGNICLQL). Residues 143–162 (APESKFQIFNNVTNETYVDT) are Extracellular-facing. A helical transmembrane segment spans residues 163-191 (AAMEAERLHVSATLACLTAVIQMALGFMQ). Residues 192 to 201 (FGFVAIYLSE) are Cytoplasmic-facing. A helical membrane pass occupies residues 202-224 (SFIRGFMTAAGLQILISVLKYIF). Topologically, residues 225–237 (GLTIPSYTGPGSI) are extracellular. An intramembrane region (helical) is located at residues 238-246 (VFTFIDICK). The Extracellular portion of the chain corresponds to 247 to 254 (NLPHTNIA). A helical membrane pass occupies residues 255-275 (SLIFALVSGVFLVLVKELNAR). Topologically, residues 276–286 (YMHKIHFPIPT) are cytoplasmic. The helical transmembrane segment at 287–299 (EMIVVVVATAISG) threads the bilayer. The Extracellular segment spans residues 300–334 (SCKMPKKYHMQIVGEIRQGFPTPVAPMVSQWKGMV). Residues 335–358 (GTAFSLAIVGYVINLAMGRTLASK) traverse the membrane as a helical segment. Topologically, residues 359–365 (HGYDVDS) are cytoplasmic. The chain crosses the membrane as a helical span at residues 366–379 (NQEMIALGCSNFFG). Over 380 to 390 (SFFKIHVICCA) the chain is Extracellular. A helical membrane pass occupies residues 391–400 (LSVTLAVDGA). At 401-405 (GGKSQ) the chain is on the cytoplasmic side. The helical transmembrane segment at 406–419 (VASLCVSLVVMITM) threads the bilayer. At 420 to 431 (LVLGSYLYPLPK) the chain is on the extracellular side. The helical transmembrane segment at 432–457 (AVLGALIAVNLKNSLKQLTDPYYLWR) threads the bilayer. Residues 458-461 (KSKL) are Cytoplasmic-facing. The helical transmembrane segment at 462–476 (DCCVWVVSFLSSFFL) threads the bilayer. The Extracellular segment spans residues 477-479 (SLP). A helical membrane pass occupies residues 480-498 (YGVAVGVAFSILVVIFQTQ). Topologically, residues 499-790 (FRNGSTLAQV…MFHTETLTAL (292 aa)) are cytoplasmic. The STAS domain maps to 519-737 (TYNRAQEIAG…PSIHDAVLFA (219 aa)).

This sequence belongs to the SLC26A/SulP transporter (TC 2.A.53) family. In terms of assembly, homodimer. As to expression, expressed in stomach and trachea. Abundantly expressed in the apical domain of the surface epithelial cells and the deep cells in the gastric gland. Also expressed in heart, brain, lung and liver.

The protein resides in the cell membrane. Its subcellular location is the endomembrane system. The enzyme catalyses chloride(in) = chloride(out). The catalysed reaction is hydrogencarbonate(in) + chloride(out) = hydrogencarbonate(out) + chloride(in). With respect to regulation, inhibited by ammonium and thiosulfate. Ion transporter that can act both as an ion channel and anion exchanger. Mainly acts as a chloride channel, which mediate uncoupled chloride anion transport in an alternate-access mechanism where a saturable binding site is alternately exposed to either one or the other side of the membrane. Also acts as a DIDS- and thiosulfate- sensitive anion exchanger the exchange of chloride for bicarbonate ions across the cell membrane. This is Solute carrier family 26 member 9 from Mus musculus (Mouse).